Reading from the N-terminus, the 828-residue chain is Class I hydrophobin hum3 (828 aa).

A signal peptide spans 1 to 22 (MKYLQFLAAVAAVSAFSGPVLA). Residues N156, N222, and N738 are each glycosylated (N-linked (GlcNAc...) asparagine). Disulfide bonds link C750–C808, C757–C802, C758–C788, and C809–C822. An N-linked (GlcNAc...) asparagine glycan is attached at N811.

This sequence in the C-terminal section; belongs to the fungal hydrophobin family. Self-assembles to form functional amyloid fibrils called rodlets. Self-assembly into fibrillar rodlets occurs spontaneously at hydrophobic:hydrophilic interfaces and the rodlets further associate laterally to form amphipathic monolayers. Hum3 is an atypical hydrophobin that consists in a repetitive repellent-like region that spans 578 aa which is separated from a hydrophobin-like domain by a spacer region containing three possible kex2 processing sites. The repetitive region contains 17 amphipathic repeats of 31-36 aa each of them with a C-terminal putative kex2 processing motif.

The protein localises to the secreted. Its subcellular location is the cell wall. Its function is as follows. Aerial growth, conidiation, and dispersal of filamentous fungi in the environment rely upon a capability of their secreting small amphipathic proteins called hydrophobins (HPBs) with low sequence identity. Class I can self-assemble into an outermost layer of rodlet bundles on aerial cell surfaces, conferring cellular hydrophobicity that supports fungal growth, development and dispersal; whereas Class II form highly ordered films at water-air interfaces through intermolecular interactions but contribute nothing to the rodlet structure. Atypical class I hydrophobin that is preceded by a signal sequence and 17 imperfect repeats. The repeated peptides might function as repellents whereas the class I hydrophobin seems not to be crucial for the formation of aerial hyphae. Hydrophobins of Mycosarcoma maydis have been functionally replaced, at least partially, by repellents. Hum3 and rsp1 together are pathogenicity proteins that share an essential function in early stages of the infection. The chain is Class I hydrophobin hum3 from Mycosarcoma maydis (Corn smut fungus).